A 138-amino-acid polypeptide reads, in one-letter code: Large ribosomal subunit protein bL17 (138 aa).

Positions 118-138 are disordered; it reads RDEDAKGKDSGPSQDGAAEAA.

It belongs to the bacterial ribosomal protein bL17 family. In terms of assembly, part of the 50S ribosomal subunit. Contacts protein L32.

The chain is Large ribosomal subunit protein bL17 from Rhodopseudomonas palustris (strain HaA2).